Here is a 233-residue protein sequence, read N- to C-terminus: 7-cyano-7-deazaguanine synthase (233 aa).

7–17 contacts ATP; sequence LSGGLDSAVTS. Residues Cys195, Cys206, Cys209, and Cys212 each coordinate Zn(2+).

Belongs to the QueC family. Requires Zn(2+) as cofactor.

The enzyme catalyses 7-carboxy-7-deazaguanine + NH4(+) + ATP = 7-cyano-7-deazaguanine + ADP + phosphate + H2O + H(+). It participates in purine metabolism; 7-cyano-7-deazaguanine biosynthesis. Catalyzes the ATP-dependent conversion of 7-carboxy-7-deazaguanine (CDG) to 7-cyano-7-deazaguanine (preQ(0)). This chain is 7-cyano-7-deazaguanine synthase, found in Methanococcus maripaludis (strain C6 / ATCC BAA-1332).